The chain runs to 89 residues: Probable oxaloacetate decarboxylase gamma chain (89 aa).

Residues 13-33 (LMLSGMGFVITFLLILIWAIT) traverse the membrane as a helical segment.

It belongs to the OadG family. As to quaternary structure, heterotrimer of an alpha, a beta and a gamma subunit. Na(+) serves as cofactor.

The protein localises to the cell membrane. The catalysed reaction is oxaloacetate + 2 Na(+)(in) + H(+) = pyruvate + 2 Na(+)(out) + CO2. Catalyzes the decarboxylation of oxaloacetate coupled to Na(+) translocation. The polypeptide is Probable oxaloacetate decarboxylase gamma chain (Actinobacillus succinogenes (strain ATCC 55618 / DSM 22257 / CCUG 43843 / 130Z)).